A 137-amino-acid chain; its full sequence is Profilin-3 (137 aa).

It belongs to the profilin family. In terms of assembly, interacts with ACTRT3. In terms of tissue distribution, testis specific.

The protein resides in the cytoplasm. It localises to the cytoskeleton. The protein localises to the nucleus. Its function is as follows. Binds to actin and affects the structure of the cytoskeleton. Slightly reduces actin polymerization. Binds to poly-L-proline, phosphatidylinositol 3-phosphate (PtdIns(3)P), phosphatidylinositol 4,5-bisphosphate (PtdIns(4,5)P2) and phosphatidylinositol 4-phosphate (PtdIns(4)P). May be involved in spermatogenesis. This Homo sapiens (Human) protein is Profilin-3 (PFN3).